The chain runs to 86 residues: MANTKSAIKRIRRIATQTLVNKARKSKYRNAIKKMNLLLVEKKKDEALKFLPKLNSELMKVAKTGIIKKANASRNISRITKKISAL.

It belongs to the bacterial ribosomal protein bS20 family.

In terms of biological role, binds directly to 16S ribosomal RNA. The protein is Small ribosomal subunit protein bS20 of Pelagibacter ubique (strain HTCC1062).